Consider the following 189-residue polypeptide: Protein GrpE (189 aa).

Residues 1-14 show a composition bias toward basic and acidic residues; the sequence is MTEKNEEVVEDKNI. Residues 1–38 are disordered; it reads MTEKNEEVVEDKNISDQTDENLTEEIESEADDLQVEPD. A compositionally biased stretch (acidic residues) spans 17 to 35; it reads QTDENLTEEIESEADDLQV.

It belongs to the GrpE family. In terms of assembly, homodimer.

The protein resides in the cytoplasm. Its function is as follows. Participates actively in the response to hyperosmotic and heat shock by preventing the aggregation of stress-denatured proteins, in association with DnaK and GrpE. It is the nucleotide exchange factor for DnaK and may function as a thermosensor. Unfolded proteins bind initially to DnaJ; upon interaction with the DnaJ-bound protein, DnaK hydrolyzes its bound ATP, resulting in the formation of a stable complex. GrpE releases ADP from DnaK; ATP binding to DnaK triggers the release of the substrate protein, thus completing the reaction cycle. Several rounds of ATP-dependent interactions between DnaJ, DnaK and GrpE are required for fully efficient folding. The polypeptide is Protein GrpE (Leuconostoc mesenteroides subsp. mesenteroides (strain ATCC 8293 / DSM 20343 / BCRC 11652 / CCM 1803 / JCM 6124 / NCDO 523 / NBRC 100496 / NCIMB 8023 / NCTC 12954 / NRRL B-1118 / 37Y)).